The chain runs to 92 residues: Small ribosomal subunit protein uS19c (92 aa).

The protein belongs to the universal ribosomal protein uS19 family.

Its subcellular location is the plastid. It localises to the chloroplast. Functionally, protein S19 forms a complex with S13 that binds strongly to the 16S ribosomal RNA. The chain is Small ribosomal subunit protein uS19c from Dioscorea elephantipes (Elephant's foot yam).